The following is a 154-amino-acid chain: Myoglobin (154 aa).

The Globin domain maps to 2–148 (GLSDAEWQLV…FRNDIAAKYK (147 aa)). The residue at position 4 (Ser4) is a Phosphoserine. His65 serves as a coordination point for nitrite. An O2-binding site is contributed by His65. Thr68 is modified (phosphothreonine). His94 is a heme b binding site.

It belongs to the globin family. In terms of assembly, monomeric.

It localises to the cytoplasm. The protein localises to the sarcoplasm. It carries out the reaction Fe(III)-heme b-[protein] + nitric oxide + H2O = Fe(II)-heme b-[protein] + nitrite + 2 H(+). The catalysed reaction is H2O2 + AH2 = A + 2 H2O. Functionally, monomeric heme protein which primary function is to store oxygen and facilitate its diffusion within muscle tissues. Reversibly binds oxygen through a pentacoordinated heme iron and enables its timely and efficient release as needed during periods of heightened demand. Depending on the oxidative conditions of tissues and cells, and in addition to its ability to bind oxygen, it also has a nitrite reductase activity whereby it regulates the production of bioactive nitric oxide. Under stress conditions, like hypoxia and anoxia, it also protects cells against reactive oxygen species thanks to its pseudoperoxidase activity. The polypeptide is Myoglobin (MB) (Orycteropus afer (Aardvark)).